A 97-amino-acid chain; its full sequence is Co-chaperonin GroES (97 aa).

It belongs to the GroES chaperonin family. In terms of assembly, heptamer of 7 subunits arranged in a ring. Interacts with the chaperonin GroEL.

Its subcellular location is the cytoplasm. Together with the chaperonin GroEL, plays an essential role in assisting protein folding. The GroEL-GroES system forms a nano-cage that allows encapsulation of the non-native substrate proteins and provides a physical environment optimized to promote and accelerate protein folding. GroES binds to the apical surface of the GroEL ring, thereby capping the opening of the GroEL channel. This Tolumonas auensis (strain DSM 9187 / NBRC 110442 / TA 4) protein is Co-chaperonin GroES.